The primary structure comprises 493 residues: Probable cytochrome P450 508A2 (493 aa).

Residues 1–21 traverse the membrane as a helical segment; that stretch reads MIFGIIVYLFLIYILHNAYSK. Cys-439 serves as a coordination point for heme.

The protein belongs to the cytochrome P450 family. It depends on heme as a cofactor.

It localises to the membrane. The protein is Probable cytochrome P450 508A2 (cyp508A2-1) of Dictyostelium discoideum (Social amoeba).